Here is a 210-residue protein sequence, read N- to C-terminus: Tetraspanin-31 (210 aa).

At 1–12 the chain is on the cytoplasmic side; it reads MVCGGFACSRNA. A helical membrane pass occupies residues 13–33; sequence LCALNVVYMLVGFLLIGVAAW. Topologically, residues 34–44 are extracellular; it reads GKGLGVVSSIH. A helical transmembrane segment spans residues 45 to 65; sequence IIGGVIAVGVFLLLIAVAGLV. The Cytoplasmic segment spans residues 66–72; it reads GAANHHQ. A helical transmembrane segment spans residues 73 to 93; sequence VLLFFYMIILGLVFIFQFGIS. The Extracellular portion of the chain corresponds to 94–173; the sequence is CSCLAINRNT…FLKHSDKALK (80 aa). N-linked (GlcNAc...) asparagine glycosylation is found at Asn-109, Asn-117, and Asn-134. The helical transmembrane segment at 174 to 194 threads the bilayer; it reads ILGGVGLFFSFTEILGVWLAM. Topologically, residues 195 to 210 are cytoplasmic; it reads RFRNQKDPRANPSAFL.

Belongs to the tetraspanin (TM4SF) family.

The protein localises to the membrane. The polypeptide is Tetraspanin-31 (Tspan31) (Mus musculus (Mouse)).